Reading from the N-terminus, the 347-residue chain is S-adenosylmethionine:tRNA ribosyltransferase-isomerase (347 aa).

It belongs to the QueA family. Monomer.

Its subcellular location is the cytoplasm. The enzyme catalyses 7-aminomethyl-7-carbaguanosine(34) in tRNA + S-adenosyl-L-methionine = epoxyqueuosine(34) in tRNA + adenine + L-methionine + 2 H(+). Its pathway is tRNA modification; tRNA-queuosine biosynthesis. Transfers and isomerizes the ribose moiety from AdoMet to the 7-aminomethyl group of 7-deazaguanine (preQ1-tRNA) to give epoxyqueuosine (oQ-tRNA). This is S-adenosylmethionine:tRNA ribosyltransferase-isomerase from Ectopseudomonas mendocina (strain ymp) (Pseudomonas mendocina).